A 307-amino-acid chain; its full sequence is Plastid division protein PDV2 (307 aa).

M1 is subject to N-acetylmethionine. Topologically, residues 1 to 213 (MEDEEGIGLI…SGGSSHGVIR (213 aa)) are cytoplasmic. The disordered stretch occupies residues 28–66 (SSTTVSDNGDGNEDLSPGEGRKSEIIGNQDKDFDSISSE). The segment covering 46–61 (EGRKSEIIGNQDKDFD) has biased composition (basic and acidic residues). The residue at position 50 (S50) is a Phosphoserine. Residues 76–103 (LLRIRDALEALESQLASLQNLRQRQQYE) are a coiled coil. The interval 174–206 (HLPSKKKSDANGFGSGHVRNEAEAKSPNGGSGG) is disordered. A helical membrane pass occupies residues 214–234 (FLGSVAKIVLPIIGVISLLSA). Over 235–307 (SGYGPEMRKR…AKRDVTYGYG (73 aa)) the chain is Chloroplast intermembrane. The ARC6 binding stretch occupies residues 235-307 (SGYGPEMRKR…AKRDVTYGYG (73 aa)).

In terms of assembly, interacts (via C-terminus) with ARC6 (via C-terminus) in the chloroplast intermembrane space; this interaction induces ARC6 homodimerization and leads to the formation of a heterotetramer containing two ARC6 and two PDV2 subunits. Interacts with ARC5/DRP5B. Mostly expressed in young leaves.

The protein localises to the plastid. It is found in the chloroplast outer membrane. Functionally, component of the plastid division machinery consisting in a binary fission accomplished by the simultaneous constriction of the FtsZ ring on the stromal side of the inner envelope membrane, and the ARC5/DRP5B ring on the cytosolic side of the outer envelope membrane. Positive factor of chloroplast division required, with a dosage effect, to mediate the recruitment and dimerization of ARC5/DRP5B at the midplastid constriction site in the cytoplasm at plastid outer envelope membranes (OEMs). Prevents ARC5/DRP5B GTPase acrivity. Relays plastid division site position between stroma and outer surface via interactions with the cytoplasmic ARC5/DRP5B and the inner membrane ARC6 that recruits stromal FtsZ ring. Binding to phosphatidylinositol 4-phosphate (PI4P) modulates negatively chloroplast division. The polypeptide is Plastid division protein PDV2 (Arabidopsis thaliana (Mouse-ear cress)).